We begin with the raw amino-acid sequence, 321 residues long: MSKPIQMEKGVKYRDADKMALIPVKNMPTEQKEVLRKPEWMKIKLPASSKRIDDIKSAMRKNNLHSVCEEASCPNLAECFNHGTATFMILGAICTRRCPFCDVAHGRPVAPEAEEPKKLAKTIQDMKLKYVVITSVDRDDLRDGGAQHFADCNREIRALNPEIRIETLVPDFRGRMDRALEAMIDNPPDVFNHNLETAPRLYRKVRPGANYQWSLDLLKKFKEQHPNVPTKSGLMMGLGETKEEIVEVLKDLRAHGVTMLTLGQYLAPSRHHLPVERYVPPAEFDELKEIALELGFTHAACGPFVRSSYHADLQAKGEEVK.

Residues C68, C73, C79, C94, C98, C101, and S308 each coordinate [4Fe-4S] cluster. In terms of domain architecture, Radical SAM core spans F80 to T297.

This sequence belongs to the radical SAM superfamily. Lipoyl synthase family. The cofactor is [4Fe-4S] cluster.

The protein localises to the cytoplasm. The enzyme catalyses [[Fe-S] cluster scaffold protein carrying a second [4Fe-4S](2+) cluster] + N(6)-octanoyl-L-lysyl-[protein] + 2 oxidized [2Fe-2S]-[ferredoxin] + 2 S-adenosyl-L-methionine + 4 H(+) = [[Fe-S] cluster scaffold protein] + N(6)-[(R)-dihydrolipoyl]-L-lysyl-[protein] + 4 Fe(3+) + 2 hydrogen sulfide + 2 5'-deoxyadenosine + 2 L-methionine + 2 reduced [2Fe-2S]-[ferredoxin]. It participates in protein modification; protein lipoylation via endogenous pathway; protein N(6)-(lipoyl)lysine from octanoyl-[acyl-carrier-protein]: step 2/2. Its function is as follows. Catalyzes the radical-mediated insertion of two sulfur atoms into the C-6 and C-8 positions of the octanoyl moiety bound to the lipoyl domains of lipoate-dependent enzymes, thereby converting the octanoylated domains into lipoylated derivatives. This chain is Lipoyl synthase, found in Aliivibrio fischeri (strain ATCC 700601 / ES114) (Vibrio fischeri).